Reading from the N-terminus, the 57-residue chain is Exactin (57 aa).

Cystine bridges form between Cys3–Cys19, Cys12–Cys37, Cys41–Cys49, and Cys50–Cys55.

It belongs to the three-finger toxin family. Short-chain subfamily. Orphan group XX sub-subfamily. As to expression, expressed by the venom gland.

The protein localises to the secreted. Its function is as follows. Anticoagulant protein that prevents the activation of factor X (F10). It acts by potently inhibiting the extrinsic tenase complex (ETC) (IC(50)=116.49 nM), a complex composed by active factor VII (F7a), tissue factor (TF) and F10. In addition, it shows weaker activities on other complexes. It weakly inhibits F10 activation by inhibiting the intrinsic tenase complex (IC(50)=4.05 uM), a complex composed by active factor IX (IXa, F9a), its cofactor factor VIII (VIIIa, F8a), and their substrate F10. It also weakly prevents prothrombin activation by inhibiting the prothrombinase complex (IC(50)=17.66 uM). It shows high kinetic constant towards F7a/TF/F10/phospholipids complex (Ki=30.62 nM) and lower kinetic constant towards F7a/TF/phospholipids complex (Ki=153.75 nM). The chain is Exactin from Hemachatus haemachatus (Rinkhals).